A 343-amino-acid polypeptide reads, in one-letter code: Protein RecA (343 aa).

66–73 (GPESSGKT) is a binding site for ATP. The interval 319-343 (IERQIREKHLPKRSAKADEAESAEA) is disordered.

This sequence belongs to the RecA family.

It is found in the cytoplasm. In terms of biological role, can catalyze the hydrolysis of ATP in the presence of single-stranded DNA, the ATP-dependent uptake of single-stranded DNA by duplex DNA, and the ATP-dependent hybridization of homologous single-stranded DNAs. It interacts with LexA causing its activation and leading to its autocatalytic cleavage. This is Protein RecA from Thioalkalivibrio sulfidiphilus (strain HL-EbGR7).